The primary structure comprises 254 residues: Alcohol dehydrogenase 2 (254 aa).

10–33 (FVAGLGGIGFDTSREIVKSGPKNL) contacts NAD(+). S138 is a substrate binding site. Residue Y151 is the Proton acceptor of the active site.

The protein belongs to the short-chain dehydrogenases/reductases (SDR) family. In terms of assembly, homodimer.

It catalyses the reaction a primary alcohol + NAD(+) = an aldehyde + NADH + H(+). The catalysed reaction is a secondary alcohol + NAD(+) = a ketone + NADH + H(+). This is Alcohol dehydrogenase 2 (Adh2) from Drosophila mulleri (Fruit fly).